Consider the following 417-residue polypeptide: Serine hydroxymethyltransferase (417 aa).

(6S)-5,6,7,8-tetrahydrofolate is bound by residues Leu-121 and 125 to 127; that span reads GHL. Lys-229 is modified (N6-(pyridoxal phosphate)lysine). 355–357 provides a ligand contact to (6S)-5,6,7,8-tetrahydrofolate; it reads SPF.

Belongs to the SHMT family. As to quaternary structure, homodimer. Pyridoxal 5'-phosphate serves as cofactor.

Its subcellular location is the cytoplasm. It carries out the reaction (6R)-5,10-methylene-5,6,7,8-tetrahydrofolate + glycine + H2O = (6S)-5,6,7,8-tetrahydrofolate + L-serine. It functions in the pathway one-carbon metabolism; tetrahydrofolate interconversion. It participates in amino-acid biosynthesis; glycine biosynthesis; glycine from L-serine: step 1/1. Its function is as follows. Catalyzes the reversible interconversion of serine and glycine with tetrahydrofolate (THF) serving as the one-carbon carrier. This reaction serves as the major source of one-carbon groups required for the biosynthesis of purines, thymidylate, methionine, and other important biomolecules. Also exhibits THF-independent aldolase activity toward beta-hydroxyamino acids, producing glycine and aldehydes, via a retro-aldol mechanism. The protein is Serine hydroxymethyltransferase of Yersinia pestis bv. Antiqua (strain Antiqua).